We begin with the raw amino-acid sequence, 424 residues long: Histidine--tRNA ligase (424 aa).

Belongs to the class-II aminoacyl-tRNA synthetase family. Homodimer.

The protein localises to the cytoplasm. It catalyses the reaction tRNA(His) + L-histidine + ATP = L-histidyl-tRNA(His) + AMP + diphosphate + H(+). This chain is Histidine--tRNA ligase, found in Francisella philomiragia subsp. philomiragia (strain ATCC 25017 / CCUG 19701 / FSC 153 / O#319-036).